The following is a 633-amino-acid chain: Probable potassium transport system protein Kup 2 (633 aa).

The next 12 helical transmembrane spans lie at 18-38 (FVGLVVGAIGVVYGDIGTSPL), 61-81 (LISLMIWTLTIIVTFKYVLFL), 107-127 (VPVLFFAGLIGSALFIGDAMI), 143-163 (ITPAFAEYVPPLSAAIMIVLF), 176-196 (FFGPITVLWFFAMAAGGVIHI), 211-231 (ALSFLAHAGTVGLIVLGAVFL), 255-275 (WFVLVFPALLLNYLGQGALVL), 293-313 (ALLPVVLLATLATIIASQAVI), 345-365 (IYVPSVNLLLLTGVLMLIFSF), 371-391 (LATAYGISVTGAMVITTMLAF), 402-422 (FMLASAALLPLFVIEVVFLAA), and 429-449 (DGGWVPVALALAIMTLMWTWT).

Belongs to the HAK/KUP transporter (TC 2.A.72) family.

The protein localises to the cell inner membrane. The catalysed reaction is K(+)(in) + H(+)(in) = K(+)(out) + H(+)(out). Transport of potassium into the cell. Likely operates as a K(+):H(+) symporter. This is Probable potassium transport system protein Kup 2 from Rhizobium etli (strain ATCC 51251 / DSM 11541 / JCM 21823 / NBRC 15573 / CFN 42).